A 420-amino-acid polypeptide reads, in one-letter code: 3-isopropylmalate dehydratase large subunit (420 aa).

3 residues coordinate [4Fe-4S] cluster: cysteine 300, cysteine 360, and cysteine 363.

Belongs to the aconitase/IPM isomerase family. LeuC type 2 subfamily. As to quaternary structure, heterodimer of LeuC and LeuD. The cofactor is [4Fe-4S] cluster.

It catalyses the reaction (2R,3S)-3-isopropylmalate = (2S)-2-isopropylmalate. The protein operates within amino-acid biosynthesis; L-leucine biosynthesis; L-leucine from 3-methyl-2-oxobutanoate: step 2/4. Functionally, catalyzes the isomerization between 2-isopropylmalate and 3-isopropylmalate, via the formation of 2-isopropylmaleate. The sequence is that of 3-isopropylmalate dehydratase large subunit from Helicobacter hepaticus (strain ATCC 51449 / 3B1).